A 167-amino-acid polypeptide reads, in one-letter code: Endoribonuclease YbeY (167 aa).

Residues His-131, His-135, and His-141 each coordinate Zn(2+).

It belongs to the endoribonuclease YbeY family. Requires Zn(2+) as cofactor.

Its subcellular location is the cytoplasm. Its function is as follows. Single strand-specific metallo-endoribonuclease involved in late-stage 70S ribosome quality control and in maturation of the 3' terminus of the 16S rRNA. This Rickettsia africae (strain ESF-5) protein is Endoribonuclease YbeY.